Reading from the N-terminus, the 325-residue chain is Forkhead box protein B1 (325 aa).

The segment at residues 12–103 (QKPPYSYISL…GDMFENGSFL (92 aa)) is a DNA-binding region (fork-head). Low complexity predominate over residues 284-309 (LSNSPPSLSPTSSQTATSQSSPATPS). A disordered region spans residues 284 to 325 (LSNSPPSLSPTSSQTATSQSSPATPSETLTSPASALHSVAVH).

Its subcellular location is the nucleus. Its function is as follows. Transcription factor expressed by neural progenitor cells in specific regions of the embryonic neuroepithelium. Essential for the mammillary nuclei maintenance. Negatively regulates the proliferation of oligodendrocyte progenitors and promotes oligodendrocyte maturation. Also expressed in mammary glands, plays a role in lactation, controls development of mammary glands and the inferior colliculi of the midbrain in the central nervous system that regulates the milk-ejection reflex. The sequence is that of Forkhead box protein B1 (FOXB1) from Homo sapiens (Human).